A 382-amino-acid chain; its full sequence is Pentraxin-related protein PTX3 (382 aa).

Positions Met-1–Ala-17 are cleaved as a signal peptide. A coiled-coil region spans residues Val-79–Ala-137. 2 disulfide bridges follow: Cys-180–Cys-358 and Cys-211–Cys-272. Residues Cys-180–Tyr-382 form the Pentraxin (PTX) domain. A glycan (N-linked (GlcNAc...) asparagine) is linked at Asn-221.

Homooctamer; disulfide-linked. Binds to C1q.

It localises to the secreted. Plays a role in the regulation of innate resistance to pathogens, inflammatory reactions, possibly clearance of self-components and female fertility. The chain is Pentraxin-related protein PTX3 (PTX3) from Bos taurus (Bovine).